The sequence spans 358 residues: 3-dehydroquinate synthase (358 aa).

NAD(+)-binding positions include 70–75 (DGEQYK), 104–108 (GVVGD), 128–129 (TT), Lys141, Lys150, and 168–171 (CLNT). Glu183, His246, and His263 together coordinate Zn(2+).

This sequence belongs to the sugar phosphate cyclases superfamily. Dehydroquinate synthase family. The cofactor is Co(2+). It depends on Zn(2+) as a cofactor. Requires NAD(+) as cofactor.

The protein resides in the cytoplasm. The catalysed reaction is 7-phospho-2-dehydro-3-deoxy-D-arabino-heptonate = 3-dehydroquinate + phosphate. It participates in metabolic intermediate biosynthesis; chorismate biosynthesis; chorismate from D-erythrose 4-phosphate and phosphoenolpyruvate: step 2/7. Its function is as follows. Catalyzes the conversion of 3-deoxy-D-arabino-heptulosonate 7-phosphate (DAHP) to dehydroquinate (DHQ). The protein is 3-dehydroquinate synthase of Shewanella sediminis (strain HAW-EB3).